A 65-amino-acid chain; its full sequence is Bucain (65 aa).

Disulfide bonds link C3/C24, C17/C42, C46/C57, and C58/C63.

This sequence belongs to the three-finger toxin family. Short-chain subfamily. Orphan group III sub-subfamily. In terms of tissue distribution, expressed by the venom gland.

The protein resides in the secreted. The sequence is that of Bucain from Bungarus candidus (Malayan krait).